The sequence spans 109 residues: Tektin-3 (109 aa).

The protein belongs to the tektin family. As to quaternary structure, microtubule inner protein component of sperm flagellar doublet microtubules. Interacts with TEKT1, TEKT2, TEKT4 and TEKT5. Interacts with CCDC38. In terms of processing, N- and O-glycosylated. May be proteolytically processed during the epididymal transit of spermatozoa. Post-translationally, ubiquitinated, leading to its degradation. Deubiquitinated by USP16, promoting its stability.

The protein localises to the cytoplasm. It is found in the cytoskeleton. It localises to the cilium axoneme. The protein resides in the flagellum axoneme. Its subcellular location is the cytoplasmic vesicle. The protein localises to the secretory vesicle. It is found in the acrosome outer membrane. Its function is as follows. Microtubule inner protein (MIP) part of the dynein-decorated doublet microtubules (DMTs) in cilia and flagellar axoneme. Forms filamentous polymers in the walls of ciliary and flagellar microtubules. Required for normal sperm mobility. The sequence is that of Tektin-3 from Mesocricetus auratus (Golden hamster).